A 239-amino-acid chain; its full sequence is Ribonuclease Le2 (239 aa).

5 disulfide bridges follow: C5–C22, C13–C58, C21–C126, C66–C118, and C191–C225. Active-site residues include H51, E111, and H115.

It belongs to the RNase T2 family.

The enzyme catalyses a ribonucleotidyl-ribonucleotide-RNA + H2O = a 3'-end 3'-phospho-ribonucleotide-RNA + a 5'-end dephospho-ribonucleoside-RNA + H(+). Its function is as follows. This is a base non-specific and adenylic acid preferential ribonuclease. The protein is Ribonuclease Le2 of Lentinula edodes (Shiitake mushroom).